Reading from the N-terminus, the 370-residue chain is Small ribosomal subunit biogenesis GTPase RsgA (370 aa).

The 160-residue stretch at 111-270 (RSEGQILAAN…LIDTPGLRGV (160 aa)) folds into the CP-type G domain. GTP is bound by residues 158–161 (TKAD) and 212–220 (GQSGAGKST). Residues Cys293, Cys298, His300, and Cys306 each contribute to the Zn(2+) site.

Belongs to the TRAFAC class YlqF/YawG GTPase family. RsgA subfamily. Monomer. Associates with 30S ribosomal subunit, binds 16S rRNA. Requires Zn(2+) as cofactor.

The protein resides in the cytoplasm. Functionally, one of several proteins that assist in the late maturation steps of the functional core of the 30S ribosomal subunit. Helps release RbfA from mature subunits. May play a role in the assembly of ribosomal proteins into the subunit. Circularly permuted GTPase that catalyzes slow GTP hydrolysis, GTPase activity is stimulated by the 30S ribosomal subunit. This Streptomyces avermitilis (strain ATCC 31267 / DSM 46492 / JCM 5070 / NBRC 14893 / NCIMB 12804 / NRRL 8165 / MA-4680) protein is Small ribosomal subunit biogenesis GTPase RsgA.